The primary structure comprises 339 residues: UDP-N-acetylglucosamine--N-acetylmuramyl-(pentapeptide) pyrophosphoryl-undecaprenol N-acetylglucosamine transferase (339 aa).

UDP-N-acetyl-alpha-D-glucosamine is bound by residues 11–13, N127, R170, S188, I235, and Q280; that span reads TGG.

It belongs to the glycosyltransferase 28 family. MurG subfamily.

Its subcellular location is the cell inner membrane. The enzyme catalyses di-trans,octa-cis-undecaprenyl diphospho-N-acetyl-alpha-D-muramoyl-L-alanyl-D-glutamyl-meso-2,6-diaminopimeloyl-D-alanyl-D-alanine + UDP-N-acetyl-alpha-D-glucosamine = di-trans,octa-cis-undecaprenyl diphospho-[N-acetyl-alpha-D-glucosaminyl-(1-&gt;4)]-N-acetyl-alpha-D-muramoyl-L-alanyl-D-glutamyl-meso-2,6-diaminopimeloyl-D-alanyl-D-alanine + UDP + H(+). It functions in the pathway cell wall biogenesis; peptidoglycan biosynthesis. In terms of biological role, cell wall formation. Catalyzes the transfer of a GlcNAc subunit on undecaprenyl-pyrophosphoryl-MurNAc-pentapeptide (lipid intermediate I) to form undecaprenyl-pyrophosphoryl-MurNAc-(pentapeptide)GlcNAc (lipid intermediate II). The polypeptide is UDP-N-acetylglucosamine--N-acetylmuramyl-(pentapeptide) pyrophosphoryl-undecaprenol N-acetylglucosamine transferase (Thermotoga maritima (strain ATCC 43589 / DSM 3109 / JCM 10099 / NBRC 100826 / MSB8)).